The chain runs to 225 residues: UPF0173 metal-dependent hydrolase Fjoh_2786 (225 aa).

This sequence belongs to the UPF0173 family.

This is UPF0173 metal-dependent hydrolase Fjoh_2786 from Flavobacterium johnsoniae (strain ATCC 17061 / DSM 2064 / JCM 8514 / BCRC 14874 / CCUG 350202 / NBRC 14942 / NCIMB 11054 / UW101) (Cytophaga johnsonae).